Reading from the N-terminus, the 441-residue chain is tRNA-2-methylthio-N(6)-dimethylallyladenosine synthase (441 aa).

The MTTase N-terminal domain maps to 5 to 121 (KKLFIKTYGC…LPQMEARLRE (117 aa)). 6 residues coordinate [4Fe-4S] cluster: cysteine 14, cysteine 50, cysteine 84, cysteine 159, cysteine 163, and cysteine 166. The Radical SAM core domain occupies 145–380 (ARRAPSAFLT…TRQQQDIQQS (236 aa)). Residues 379 to 441 (QSMVGRDVSV…RNSLAAVTLA (63 aa)) enclose the TRAM domain.

Belongs to the methylthiotransferase family. MiaB subfamily. In terms of assembly, monomer. It depends on [4Fe-4S] cluster as a cofactor.

Its subcellular location is the cytoplasm. The enzyme catalyses N(6)-dimethylallyladenosine(37) in tRNA + (sulfur carrier)-SH + AH2 + 2 S-adenosyl-L-methionine = 2-methylsulfanyl-N(6)-dimethylallyladenosine(37) in tRNA + (sulfur carrier)-H + 5'-deoxyadenosine + L-methionine + A + S-adenosyl-L-homocysteine + 2 H(+). Its function is as follows. Catalyzes the methylthiolation of N6-(dimethylallyl)adenosine (i(6)A), leading to the formation of 2-methylthio-N6-(dimethylallyl)adenosine (ms(2)i(6)A) at position 37 in tRNAs that read codons beginning with uridine. The protein is tRNA-2-methylthio-N(6)-dimethylallyladenosine synthase of Roseobacter denitrificans (strain ATCC 33942 / OCh 114) (Erythrobacter sp. (strain OCh 114)).